The sequence spans 195 residues: Endoribonuclease YbeY (195 aa).

His153, His157, and His163 together coordinate Zn(2+).

Belongs to the endoribonuclease YbeY family. Zn(2+) is required as a cofactor.

The protein resides in the cytoplasm. Its function is as follows. Single strand-specific metallo-endoribonuclease involved in late-stage 70S ribosome quality control and in maturation of the 3' terminus of the 16S rRNA. The chain is Endoribonuclease YbeY from Prochlorococcus marinus (strain SARG / CCMP1375 / SS120).